The primary structure comprises 1423 residues: MALVTVQRSPTPSTTSSPCASEADSGEEECRSQPRSISESFLTVKGAALFLPRGNGSSTPRISHRRNKHAGDLQQHLQAMFILLRPEDNIRLAVRLESTYQNRTRYMVVVSTNGRQDTEESIVLGMDFSSNDSSTCTMGLVLPLWSDTLIHLDGDGGFSVSTDNRVHIFKPVSVQAMWSALQSLHKACEVARAHNYYPGSLFLTWVSYYESHINSDQSSVNEWNAMQDVQSHRPDSPALFTDIPTERERTERLIKTKLREIMMQKDLENITSKEIRTELEMQMVCNLREFKEFIDNEMIVILGQMDSPTQIFEHVFLGSEWNASNLEDLQNRGVRYILNVTREIDNFFPGVFEYHNIRVYDEEATDLLAYWNDTYKFISKAKKHGSKCLVHCKMGVSRSASTVIAYAMKEYGWNLDRAYDYVKERRTVTKPNPSFMRQLEEYQGILLASKQRHNKLWRSHSDSDLSDHHEPICKPGLELNKKDITTSADQIAEVKTMESHPPIPPVFVEHMVPQDANQKGLCTKERMICLEFTSREFHAGQIEDELNLNDINGCSSGCCLNESKFPLDNCHASKALIQPGHVPEMANKFPDLTVEDLETDALKADMNVHLLPMEELTSPLKDPPMSPDPESPSPQPSCQTEISDFSTDRIDFFSALEKFVELSQETRSRSFSHSRMEELGGGRNESCRLSVVEVAPSKVTADDQRSSSLSNTPHASEESSMDEEQSKAISELVSPDIFMQSHSENAISVKEIVTEIESISQGVGQIQLKGDILPNPCHTPKKNSIHELLLERAQTPENKPGHMEQDEDSCTAQPELAKDSGMCNPEGCLTTHSSIADLEEGEPAEGEQELQGSGMHPGAKWYPGSVRRATLEFEERLRQEQEHHGAAPTCTSLSTRKNSKNDSSVADLAPKGKSDEAPPEHSFVLKEPEMSKGKGKYSGSEAGSLSHSEQNATVPAPRVLEFDHLPDPQEGPGSDTGTQQEGVLKDLRTVIPYQESETQAVPLPLPKRVEIIEYTHIVTSPNHTGPGSEIATSEKSGEQGLRKVNMEKSVTVLCTLDENLNRTLDPNQVSLHPQVLPLPHSSSPEHNRPTDHPTSILSSPEDRGSSLSTALETAAPFVSHTTHLLSASLDYLHPQTMVHLEGFTEQSSTTDEPSAEQVSWEESQESPLSSGSEVPYKDSQLSSADLSLISKLGDNTGELQEKMDPLPVACRLPHSSSSENIKSLSHSPGVVKERAKEIESRVVFQAGLTKPSQMRRSASLAKLGYLDLCKDCLPEREPASCESPHLKLLQPFLRTDSGMHAMEDQESLENPGAPHNPEPTKSFVEQLTTTECIVQSKPVERPLVQYAKEFGSSQQYLLPRAGLELTSSEGGLPVLQTQGLQCACPAPGLAVAPRQQHGRTHPLRRLKKANDKKRTTNPFYNTM.

The interval 1-37 is disordered; it reads MALVTVQRSPTPSTTSSPCASEADSGEEECRSQPRSI. Residues 9-18 are compositionally biased toward low complexity; it reads SPTPSTTSSP. 3 positions are modified to phosphoserine: serine 17, serine 25, and serine 36. Positions 248–303 constitute a DEK-C domain; the sequence is ERTERLIKTKLREIMMQKDLENITSKEIRTELEMQMVCNLREFKEFIDNEMIVILG. One can recognise a Tyrosine-protein phosphatase domain in the interval 307 to 448; it reads SPTQIFEHVF…LEEYQGILLA (142 aa). Cysteine 392 acts as the Phosphocysteine intermediate in catalysis. Serine 461, serine 487, serine 534, serine 631, and serine 633 each carry phosphoserine. Disordered stretches follow at residues 617-641, 664-684, 696-728, 797-825, 840-862, 877-954, 962-981, 1019-1041, 1070-1108, and 1144-1179; these read TSPL…CQTE, QETR…GGRN, PSKV…QSKA, ENKP…MCNP, EGEP…AKWY, LRQE…NATV, FDHL…TQQE, TSPN…EQGL, SLHP…SSLS, and TEQS…YKDS. Pro residues predominate over residues 621 to 635; that stretch reads KDPPMSPDPESPSPQ. Positions 664–680 are enriched in basic and acidic residues; that stretch reads QETRSRSFSHSRMEELG. Residues 889 to 904 show a composition bias toward polar residues; it reads TCTSLSTRKNSKNDSS. The span at 910-932 shows a compositional bias: basic and acidic residues; that stretch reads PKGKSDEAPPEHSFVLKEPEMSK. Polar residues predominate over residues 941–953; it reads EAGSLSHSEQNAT. Positions 1019–1034 are enriched in polar residues; the sequence is TSPNHTGPGSEIATSE. A compositionally biased stretch (polar residues) spans 1144 to 1172; it reads TEQSSTTDEPSAEQVSWEESQESPLSSGS. Serine 1217 carries the post-translational modification Phosphoserine. Threonine 1422 is subject to Phosphothreonine.

It belongs to the protein-tyrosine phosphatase family. In terms of assembly, interacts with filamentous actin.

The protein resides in the cytoplasm. It is found in the cytoskeleton. Its subcellular location is the cell junction. It localises to the focal adhesion. The protein localises to the cytoplasmic vesicle. The protein resides in the secretory vesicle. It is found in the acrosome. The enzyme catalyses O-phospho-L-tyrosyl-[protein] + H2O = L-tyrosyl-[protein] + phosphate. It carries out the reaction O-phospho-L-seryl-[protein] + H2O = L-seryl-[protein] + phosphate. It catalyses the reaction O-phospho-L-threonyl-[protein] + H2O = L-threonyl-[protein] + phosphate. Its function is as follows. Protein phosphatase which regulates actin filament dynamics. Dephosphorylates and activates the actin binding/depolymerizing factor cofilin, which subsequently binds to actin filaments and stimulates their disassembly. Inhibitory phosphorylation of cofilin is mediated by LIMK1, which may also be dephosphorylated and inactivated by this protein. Required for spermatogenesis. Involved in acrosome biogenesis, probably by regulating cofilin-mediated actin cytoskeleton remodeling during proacrosomal vesicle fusion and/or Golgi to perinuclear vesicle trafficking. The polypeptide is Protein phosphatase Slingshot homolog 2 (SSH2) (Homo sapiens (Human)).